The chain runs to 278 residues: UPF0276 protein Sama_1305 (278 aa).

The protein belongs to the UPF0276 family.

The sequence is that of UPF0276 protein Sama_1305 from Shewanella amazonensis (strain ATCC BAA-1098 / SB2B).